The following is an 843-amino-acid chain: Protein translocase subunit SecA 1 (843 aa).

ATP contacts are provided by residues glutamine 91, 109 to 113 (GEGKT), and aspartate 498. Residues 799 to 813 (EAKHVSAEDGKEKVK) are compositionally biased toward basic and acidic residues. The tract at residues 799–826 (EAKHVSAEDGKEKVKPKPIVKGDQVGRN) is disordered. Zn(2+) is bound by residues cysteine 829, cysteine 831, cysteine 840, and histidine 841.

Belongs to the SecA family. Monomer and homodimer. Part of the essential Sec protein translocation apparatus which comprises SecA, SecYEG and auxiliary proteins SecDF. Other proteins may also be involved. Zn(2+) serves as cofactor.

The protein localises to the cell membrane. Its subcellular location is the cytoplasm. The catalysed reaction is ATP + H2O + cellular proteinSide 1 = ADP + phosphate + cellular proteinSide 2.. Its function is as follows. Part of the Sec protein translocase complex. Interacts with the SecYEG preprotein conducting channel. Has a central role in coupling the hydrolysis of ATP to the transfer of proteins into and across the cell membrane, serving as an ATP-driven molecular motor driving the stepwise translocation of polypeptide chains across the membrane. This Staphylococcus aureus (strain MRSA252) protein is Protein translocase subunit SecA 1.